A 258-amino-acid chain; its full sequence is Lipoprotein-releasing system ATP-binding protein LolD (258 aa).

Positions 5–244 (LQCCQLSKSY…PTSSITDPAN (240 aa)) constitute an ABC transporter domain. 41–48 (GSSGCGKS) is a binding site for ATP. Residues 222–258 (LRPLSDNSEQALPPTSSITDPANNIKDNEPQANERHV) form a disordered region. Residues 226 to 243 (SDNSEQALPPTSSITDPA) are compositionally biased toward polar residues. Residues 247 to 258 (KDNEPQANERHV) show a composition bias toward basic and acidic residues.

The protein belongs to the ABC transporter superfamily. Lipoprotein translocase (TC 3.A.1.125) family. In terms of assembly, the complex is composed of two ATP-binding proteins (LolD) and two transmembrane proteins (LolC and LolE).

It is found in the cell inner membrane. Functionally, part of the ABC transporter complex LolCDE involved in the translocation of mature outer membrane-directed lipoproteins, from the inner membrane to the periplasmic chaperone, LolA. Responsible for the formation of the LolA-lipoprotein complex in an ATP-dependent manner. The polypeptide is Lipoprotein-releasing system ATP-binding protein LolD (Colwellia psychrerythraea (strain 34H / ATCC BAA-681) (Vibrio psychroerythus)).